Reading from the N-terminus, the 227-residue chain is PKHD-type hydroxylase Bxeno_B2194 (227 aa).

One can recognise a Fe2OG dioxygenase domain in the interval 78-178; the sequence is KVFPPLFNRY…RVASFFWIQS (101 aa). Residues His96, Asp98, and His159 each contribute to the Fe cation site. Arg169 contacts 2-oxoglutarate.

Requires Fe(2+) as cofactor. It depends on L-ascorbate as a cofactor.

The polypeptide is PKHD-type hydroxylase Bxeno_B2194 (Paraburkholderia xenovorans (strain LB400)).